A 486-amino-acid polypeptide reads, in one-letter code: Glutamate--tRNA ligase (486 aa).

The 'HIGH' region signature appears at 11 to 21 (PSPTGLLHIGN). The 'KMSKS' region motif lies at 255–259 (KLSKR). Lys-258 serves as a coordination point for ATP.

Belongs to the class-I aminoacyl-tRNA synthetase family. Glutamate--tRNA ligase type 1 subfamily. As to quaternary structure, monomer.

It is found in the cytoplasm. It carries out the reaction tRNA(Glu) + L-glutamate + ATP = L-glutamyl-tRNA(Glu) + AMP + diphosphate. In terms of biological role, catalyzes the attachment of glutamate to tRNA(Glu) in a two-step reaction: glutamate is first activated by ATP to form Glu-AMP and then transferred to the acceptor end of tRNA(Glu). The polypeptide is Glutamate--tRNA ligase (Streptococcus pneumoniae (strain ATCC BAA-255 / R6)).